The primary structure comprises 259 residues: Phosphatidate cytidylyltransferase (259 aa).

The next 7 helical transmembrane spans lie at 31–51, 69–89, 103–123, 129–149, 170–190, 193–213, and 236–256; these read LVIF…CFAI, PLVL…IGLL, FFKS…LIKI, YYLL…YYIG, FLGG…YGIL, FLLG…KSFI, and FDAL…GELN.

This sequence belongs to the CDS family.

It localises to the cell membrane. The enzyme catalyses a 1,2-diacyl-sn-glycero-3-phosphate + CTP + H(+) = a CDP-1,2-diacyl-sn-glycerol + diphosphate. It functions in the pathway phospholipid metabolism; CDP-diacylglycerol biosynthesis; CDP-diacylglycerol from sn-glycerol 3-phosphate: step 3/3. The sequence is that of Phosphatidate cytidylyltransferase (cdsA) from Aquifex aeolicus (strain VF5).